The following is a 237-amino-acid chain: Protein-S-isoprenylcysteine O-methyltransferase (237 aa).

Transmembrane regions (helical) follow at residues 26 to 46 (SSAI…LFIF), 53 to 73 (FGIY…WVTM), 92 to 112 (FNMA…FFPS), and 116 to 136 (FSLW…RSVA). S-adenosyl-L-methionine contacts are provided by residues Gln-149, 156–159 (HVLV), Tyr-164, and 169–172 (HPSY). A helical membrane pass occupies residues 184–204 (VILMNPISIIGFGWASWSFFS). Arg-206 is a substrate binding site. Glu-210 is a binding site for S-adenosyl-L-methionine.

This sequence belongs to the class VI-like SAM-binding methyltransferase superfamily. Isoprenylcysteine carboxyl methyltransferase family.

The protein resides in the endoplasmic reticulum membrane. It catalyses the reaction [protein]-C-terminal S-[(2E,6E)-farnesyl]-L-cysteine + S-adenosyl-L-methionine = [protein]-C-terminal S-[(2E,6E)-farnesyl]-L-cysteine methyl ester + S-adenosyl-L-homocysteine. Functionally, methylates the C-terminal cysteine residues of small GTPases and the heterotrimeric G protein gamma subunit in response to cAMP. The methylation is required for intercellular signaling and regulation of cAMP waves propagation. It also seems to induce the activity of car1, a G protein-coupled receptor which senses extracellular cAMP during the aggregation phase of development. The chain is Protein-S-isoprenylcysteine O-methyltransferase (icmt-1) from Dictyostelium discoideum (Social amoeba).